A 642-amino-acid chain; its full sequence is Frizzled-1 (642 aa).

The N-terminal stretch at 1–68 (MAEEAAPSES…WLLEAPLLLG (68 aa)) is a signal peptide. Disordered regions lie at residues 26-45 (PGRR…RPRA) and 76-99 (QVSG…QYNG). Topologically, residues 69–317 (VRAQAAGQVS…PEELRFSRTW (249 aa)) are extracellular. The region spanning 106–225 (PDHGYCQPIS…HGAGELCVGQ (120 aa)) is the FZ domain. 5 cysteine pairs are disulfide-bonded: Cys111/Cys172, Cys119/Cys165, Cys156/Cys193, Cys182/Cys222, and Cys186/Cys210. Asn125 is a glycosylation site (N-linked (GlcNAc...) asparagine). Residue Asn226 is glycosylated (N-linked (GlcNAc...) asparagine). The chain crosses the membrane as a helical span at residues 318-338 (IGIWSVLCCASTLFTVLTYLV). Residues 339-349 (DMRRFSYPERP) lie on the Cytoplasmic side of the membrane. Residues 350-370 (IIFLSGCYTAVAVAYIAGFLL) form a helical membrane-spanning segment. The Extracellular portion of the chain corresponds to 371-397 (EDRVVCNDKFAEDGARTVAQGTKKEGC). The chain crosses the membrane as a helical span at residues 398–418 (TILFMMLYFFSMASSIWWVIL). The Cytoplasmic portion of the chain corresponds to 419 to 440 (SLTWFLAAGMKWGHEAIEANSQ). Residues 441 to 461 (YFHLAAWAVPAIKTITILALG) traverse the membrane as a helical segment. The Extracellular segment spans residues 462–484 (QVDGDVLSGVCFVGLNNVDALRG). The chain crosses the membrane as a helical span at residues 485 to 505 (FVLAPLFVYLFIGTSFLLAGF). Residues 506–531 (VSLFRIRTIMKHDGTKTEKLEKLMVR) lie on the Cytoplasmic side of the membrane. A helical transmembrane segment spans residues 532 to 552 (IGVFSVLYTVPATIVIACYFY). Topologically, residues 553–593 (EQAFRDQWERSWVAQSCKSYAIPCPHLQGGGGVPPHPPMSP) are extracellular. The chain crosses the membrane as a helical span at residues 594–614 (DFTVFMIKYLMTLIVGITSGF). Over 615 to 642 (WIWSGKTLNSWRKFYTRLTNSKQGETTV) the chain is Cytoplasmic. Positions 620-625 (KTLNSW) match the Lys-Thr-X-X-X-Trp motif, mediates interaction with the PDZ domain of Dvl family members motif. A PDZ-binding motif is present at residues 640-642 (TTV).

Belongs to the G-protein coupled receptor Fz/Smo family. Interacts with MYOC. Interacts with WNT7B. In terms of processing, ubiquitinated by ZNRF3, leading to its degradation by the proteasome. As to expression, expressed in chondrocytes.

The protein resides in the cell membrane. Functionally, receptor for Wnt proteins. Activated by WNT7B. Activated by WNT3A, WNT3, WNT1 and to a lesser extent WNT2, but apparently not by WNT4, WNT5A, WNT5B, WNT6, WNT7A or WNT7B. Contradictory results showing activation by WNT7B have been described for mouse. Functions in the canonical Wnt/beta-catenin signaling pathway. The canonical Wnt/beta-catenin signaling pathway leads to the activation of disheveled proteins, inhibition of GSK-3 kinase, nuclear accumulation of beta-catenin and activation of Wnt target genes. A second signaling pathway involving PKC and calcium fluxes has been seen for some family members, but it is not yet clear if it represents a distinct pathway or if it can be integrated in the canonical pathway, as PKC seems to be required for Wnt-mediated inactivation of GSK-3 kinase. Both pathways seem to involve interactions with G-proteins. May be involved in transduction and intercellular transmission of polarity information during tissue morphogenesis and/or in differentiated tissues. This chain is Frizzled-1 (Fzd1), found in Mus musculus (Mouse).